Here is a 1100-residue protein sequence, read N- to C-terminus: ATP-dependent DNA helicase mph1 (1100 aa).

The segment covering 1–21 has biased composition (acidic residues); that stretch reads MSDSDDYLQDDPDDQAFDDFA. Residues 1-250 form a disordered region; that stretch reads MSDSDDYLQD…RPSSFMQSSN (250 aa). A compositionally biased stretch (low complexity) spans 38-61; that stretch reads RNQTRNTTSRRNEDNSVASDSDSF. Residues 84–94 are compositionally biased toward basic and acidic residues; it reads FADHPENEASS. The segment covering 104 to 117 has biased composition (polar residues); the sequence is NNPQENIFVTQLTQ. Over residues 135 to 146 the composition is skewed to pro residues; it reads PPPPPPPAPTKP. Polar residues-rich tracts occupy residues 182 to 191 and 200 to 209; these read RLSFSTAQNS and NAPTNTAQTE. Acidic residues predominate over residues 212 to 223; that stretch reads DFLDDIPDDAFD. Residues 237-249 are compositionally biased toward low complexity; sequence SNSSRPSSFMQSS. Residues 317-485 form the Helicase ATP-binding domain; it reads ITQKGLFHNL…AVIDGLEISK (169 aa). 330 to 337 lines the ATP pocket; that stretch reads LPTGLGKT. Positions 433-436 match the DEAH box motif; the sequence is DEAH. Residues 655-829 enclose the Helicase C-terminal domain; the sequence is YLKQVVLNHF…GTRFTFHDDK (175 aa). Disordered stretches follow at residues 850-913 and 1003-1100; these read PEEN…PEPV and RRPA…LGRR. Composition is skewed to basic residues over residues 863 to 875 and 1019 to 1028; these read RRGR…PKKF and GNKKRLRKGR. The segment covering 1053-1066 has biased composition (polar residues); it reads QPISPEQLLSSFTD. The span at 1082-1092 shows a compositional bias: acidic residues; it reads LELDADFEAPD.

This sequence belongs to the DEAD box helicase family. DEAH subfamily. FANCM sub-subfamily. As to quaternary structure, interacts with the MHF histone-fold complex to form the FANCM-MHF complex.

It localises to the nucleus. The catalysed reaction is ATP + H2O = ADP + phosphate + H(+). Functionally, ATP-dependent DNA helicase involved in DNA damage repair by homologous recombination and in genome maintenance. Capable of unwinding D-loops. Plays a role in limiting crossover recombinants during mitotic DNA double-strand break (DSB) repair. Component of a FANCM-MHF complex which promotes gene conversion at blocked replication forks, probably by reversal of the stalled fork. This is ATP-dependent DNA helicase mph1 from Aspergillus terreus (strain NIH 2624 / FGSC A1156).